The primary structure comprises 65 residues: Large ribosomal subunit protein uL29 (65 aa).

It belongs to the universal ribosomal protein uL29 family.

The protein is Large ribosomal subunit protein uL29 of Acinetobacter baumannii (strain AB307-0294).